Reading from the N-terminus, the 414-residue chain is L-cysteine:1D-myo-inositol 2-amino-2-deoxy-alpha-D-glucopyranoside ligase (414 aa).

Cys44 serves as a coordination point for Zn(2+). L-cysteinyl-5'-AMP is bound by residues 44 to 47 (CGIT), Thr59, and 82 to 84 (NIT). A 'HIGH' region motif is present at residues 46-56 (ITPYDSTHLGH). The 'ERGGDP' region motif lies at 188-193 (ERGGDP). Trp228 is a binding site for L-cysteinyl-5'-AMP. A Zn(2+)-binding site is contributed by Cys232. Residue 250–252 (GSD) coordinates L-cysteinyl-5'-AMP. His257 is a binding site for Zn(2+). Ile284 is a binding site for L-cysteinyl-5'-AMP. The 'KMSKS' region motif lies at 290-294 (KMSKS).

This sequence belongs to the class-I aminoacyl-tRNA synthetase family. MshC subfamily. Monomer. The cofactor is Zn(2+).

The enzyme catalyses 1D-myo-inositol 2-amino-2-deoxy-alpha-D-glucopyranoside + L-cysteine + ATP = 1D-myo-inositol 2-(L-cysteinylamino)-2-deoxy-alpha-D-glucopyranoside + AMP + diphosphate + H(+). Its function is as follows. Catalyzes the ATP-dependent condensation of GlcN-Ins and L-cysteine to form L-Cys-GlcN-Ins. In Corynebacterium diphtheriae (strain ATCC 700971 / NCTC 13129 / Biotype gravis), this protein is L-cysteine:1D-myo-inositol 2-amino-2-deoxy-alpha-D-glucopyranoside ligase (mshC).